We begin with the raw amino-acid sequence, 204 residues long: Peptide deformylase (204 aa).

Residues cysteine 131 and histidine 174 each contribute to the Fe cation site. The active site involves glutamate 175. Position 178 (histidine 178) interacts with Fe cation.

Belongs to the polypeptide deformylase family. It depends on Fe(2+) as a cofactor.

It catalyses the reaction N-terminal N-formyl-L-methionyl-[peptide] + H2O = N-terminal L-methionyl-[peptide] + formate. Removes the formyl group from the N-terminal Met of newly synthesized proteins. Requires at least a dipeptide for an efficient rate of reaction. N-terminal L-methionine is a prerequisite for activity but the enzyme has broad specificity at other positions. This Streptococcus mutans serotype c (strain ATCC 700610 / UA159) protein is Peptide deformylase.